Here is a 465-residue protein sequence, read N- to C-terminus: METGFPAIMYPGSFIGGWGEEYLSWEGPGLPDFVFQQQPVESEAMHCSNPKSGVVLATVARGPDACQILTRAPLGQDPPQRTVLGLLTANGQYRRTCGQGITRIRCYSGSENAFPPAGKKALPDCGVQEPPKQGFDIYMDELEQGDRDSCSVREGMAFEDVYEVDTGTLKSDLHFLLDFNTVSPMLVDSSLLSQSEDISSLGTDVINVTEYAEEIYQYLREAEIRHRPKAHYMKKQPDITEGMRTILVDWLVEVGEEYKLRAETLYLAVNFLDRFLSCMSVLRGKLQLVGTAAMLLASKYEEIYPPEVDEFVYITDDTYTKRQLLKMEHLLLKVLAFDLTVPTTNQFLLQYLRRQGVCVRTENLAKYVAELSLLEADPFLKYLPSLIAAAAFCLANYTVNKHFWPETLAAFTGYSLSEIVPCLSELHKAYLDIPHRPQQAIREKYKASKYLCVSLMEPPAVLLLQ.

Belongs to the cyclin family. Cyclin AB subfamily. As to quaternary structure, interacts with the CDK2 and the CDC2 protein kinases to form a serine/threonine kinase holoenzyme complex. The cyclin subunit imparts substrate specificity to the complex. Does not bind CDK4 and CDK5 (in vitro). The cyclin A1-CDK2 complex interacts with transcription factor E2F-1 and RB proteins. Found in a complex with CDK2, CABLES1 and CCNE1. Interacts with INCA1. Interacts with KLHDC9. Post-translationally, polyubiquitinated via 'Lys-11'-linked ubiquitin by the anaphase-promoting complex (APC/C), leading to its degradation by the proteasome. Deubiquitinated and stabilized by USP37 enables entry into S phase. Ubiquitinated during the G1 phase by the SCF(FBXO31) complex, leading to its proteasomal degradation. In terms of tissue distribution, very high levels in testis and very low levels in brain. Also found in myeloid leukemia cell lines.

The protein localises to the nucleus. Functionally, may be involved in the control of the cell cycle at the G1/S (start) and G2/M (mitosis) transitions. May primarily function in the control of the germline meiotic cell cycle and additionally in the control of mitotic cell cycle in some somatic cells. The polypeptide is Cyclin-A1 (CCNA1) (Homo sapiens (Human)).